Consider the following 210-residue polypeptide: DNA-directed RNA polymerase subunit 5-like protein 1 (210 aa).

It belongs to the archaeal Rpo5/eukaryotic RPB5 RNA polymerase subunit family.

It localises to the nucleus. The polypeptide is DNA-directed RNA polymerase subunit 5-like protein 1 (NRPB5L1) (Arabidopsis thaliana (Mouse-ear cress)).